The sequence spans 541 residues: Propionyl-CoA carboxylase beta chain, mitochondrial (541 aa).

The transit peptide at 1–28 (MAAVIRIRAMAAGTRLRVLNCGLGTTIR) directs the protein to the mitochondrion. In terms of domain architecture, CoA carboxyltransferase N-terminal spans 34-292 (PVSVNERIEN…SNQDPASIRE (259 aa)). The tract at residues 34-535 (PVSVNERIEN…SKKVHRPWRK (502 aa)) is carboxyltransferase. Serine 73 is subject to Phosphoserine. The residue at position 101 (lysine 101) is an N6-acetyllysine; alternate. The residue at position 101 (lysine 101) is an N6-succinyllysine; alternate. Lysine 250 bears the N6-succinyllysine mark. Residues 296–535 (PSDRLVPELD…SKKVHRPWRK (240 aa)) enclose the CoA carboxyltransferase C-terminal domain. Residues 327–360 (DEREFFEIMPNYAKNIVIGFARMNGRTVGIVGNQ) form an acyl-CoA binding region. An N6-acetyllysine; alternate mark is found at lysine 476 and lysine 491. N6-succinyllysine; alternate is present on residues lysine 476 and lysine 491.

The protein belongs to the AccD/PCCB family. In terms of assembly, the holoenzyme is a dodecamer composed of 6 PCCA/alpha subunits and 6 PCCB/beta subunits.

The protein resides in the mitochondrion matrix. It carries out the reaction propanoyl-CoA + hydrogencarbonate + ATP = (S)-methylmalonyl-CoA + ADP + phosphate + H(+). The enzyme catalyses butanoyl-CoA + hydrogencarbonate + ATP = (2S)-ethylmalonyl-CoA + ADP + phosphate + H(+). It functions in the pathway metabolic intermediate metabolism; propanoyl-CoA degradation; succinyl-CoA from propanoyl-CoA: step 1/3. In terms of biological role, this is one of the 2 subunits of the biotin-dependent propionyl-CoA carboxylase (PCC), a mitochondrial enzyme involved in the catabolism of odd chain fatty acids, branched-chain amino acids isoleucine, threonine, methionine, and valine and other metabolites. Propionyl-CoA carboxylase catalyzes the carboxylation of propionyl-CoA/propanoyl-CoA to D-methylmalonyl-CoA/(S)-methylmalonyl-CoA. Within the holoenzyme, the alpha subunit catalyzes the ATP-dependent carboxylation of the biotin carried by the biotin carboxyl carrier (BCC) domain, while the beta subunit then transfers the carboxyl group from carboxylated biotin to propionyl-CoA. Propionyl-CoA carboxylase also significantly acts on butyryl-CoA/butanoyl-CoA, which is converted to ethylmalonyl-CoA/(2S)-ethylmalonyl-CoA. Other alternative minor substrates include (2E)-butenoyl-CoA/crotonoyl-CoA. This chain is Propionyl-CoA carboxylase beta chain, mitochondrial, found in Rattus norvegicus (Rat).